The sequence spans 198 residues: NAD(P)H dehydrogenase (quinone) (198 aa).

In terms of domain architecture, Flavodoxin-like spans 4-189; it reads ILVLYYSMYG…SIARYQGEYV (186 aa). FMN-binding positions include 10 to 15 and 78 to 80; these read SMYGHI and TRF. Tyrosine 12 contacts NAD(+). Tryptophan 98 lines the substrate pocket. FMN is bound by residues 113–118 and histidine 133; that span reads STGTGG.

This sequence belongs to the WrbA family. The cofactor is FMN.

The catalysed reaction is a quinone + NADH + H(+) = a quinol + NAD(+). The enzyme catalyses a quinone + NADPH + H(+) = a quinol + NADP(+). This is NAD(P)H dehydrogenase (quinone) from Salmonella paratyphi B (strain ATCC BAA-1250 / SPB7).